The chain runs to 285 residues: Probable endonuclease 4 (285 aa).

Zn(2+) contacts are provided by H69, H109, E145, D179, H182, H216, D229, H231, and E261.

Belongs to the AP endonuclease 2 family. The cofactor is Zn(2+).

The catalysed reaction is Endonucleolytic cleavage to 5'-phosphooligonucleotide end-products.. Functionally, endonuclease IV plays a role in DNA repair. It cleaves phosphodiester bonds at apurinic or apyrimidinic (AP) sites, generating a 3'-hydroxyl group and a 5'-terminal sugar phosphate. This chain is Probable endonuclease 4, found in Escherichia coli (strain SMS-3-5 / SECEC).